A 778-amino-acid polypeptide reads, in one-letter code: MTAGSVCAPQIIPLRVPQPGKANHEIDTNTLLEMKSDTPDVNIYYTLDGSKPDFLKKVGSGENNTFKYVKPITLPDGKIQVKAVAVSKDCRQSGIVTKVFQVDYEPPKMVSSEDNVEDALKGFSKQELKNGFVGPKLRKKYKNAENKSTWNVNLRRLADLKVGERADPKTLKDLRFAESPLEIPAYHEGASARLPTHQAQSPGFAHITGQKSLTSTEIMRIQRETDFLKCAHCLASRPSDPFARFCHECGAPVPPIFGYRLPPPEGAQMGLCAECGSMVPMNTPICVVCEAPLAPQLRPQASLYLKERVICRTCGTGNPAHLRYCVTCEGPLPPTQEQWLCNGDEVPHPPARNGETISCSRCGCQNLWEASFCDWCGAMLGISASHSVCPKCGASNHLTARFCGSCGIYVKSITRFRMHNSLAIVAGAPRPFPEPRSAWQSLNVPLPTSASGSKKDTGTQTSGLFYPSGKLLAKKELEAASHRQRQEKMSDHRPVLTAVSPGRGYWRKQLDHISAHLRSYAQNNPEFRALIAEPRMGKLISATVHEDGYEVSIRLNYIQVSNKSLYFNKSVNLSDHFLSSVTEGGNGLYDSRSSLVSAYSQSVSDTPESIKKMKNLKAKSFLVNPEPLTPENKLLLEEVGSSGKGRLSVLEQLLDEGADPNCCDSQGRPAVIVAVVNKHYEAIPVLAQRGADIDQQWGPFRNTALHEATLLGLEGRESIATLLGCNANAQKKNTRGQTAYDIALEMGDDLTSSLFAAKFTQGLEDQLSPPGNRILGDS.

2 positions are modified to phosphoserine: serine 179 and serine 201. 2 consecutive DZANK-type zinc fingers follow at residues cysteine 230–cysteine 289 and cysteine 359–glycine 407. 2 ANK repeats span residues glutamate 631 to cysteine 662 and glutamine 666 to glutamine 695. At serine 768 the chain carries Phosphoserine.

In terms of assembly, interacts with NINL. Associates with DYNC1H1 and multiple dynein intermediate and light chains as well as actin-binding proteins.

It is found in the cytoplasm. It localises to the cytoskeleton. The protein localises to the microtubule organizing center. Its subcellular location is the centrosome. The protein resides in the cilium basal body. Involved in vesicle transport in photoreceptor cells. In Mus musculus (Mouse), this protein is Double zinc ribbon and ankyrin repeat-containing protein 1 (Dzank1).